The chain runs to 166 residues: Dynein regulatory complex protein 8 (166 aa).

The EF-hand domain occupies 95-130 (DDYHTLLRAFRAFDPDGRGFIDAESFKSLLTGKGEA).

It belongs to the DRC8 family. Component of the nexin-dynein regulatory complex (N-DRC).

Its subcellular location is the cytoplasm. It localises to the cytoskeleton. It is found in the flagellum axoneme. Its function is as follows. Component of the nexin-dynein regulatory complex (N-DRC), a key regulator of ciliary/flagellar motility which maintains the alignment and integrity of the distal axoneme and regulates microtubule sliding in motile axonemes. The chain is Dynein regulatory complex protein 8 from Chlamydomonas reinhardtii (Chlamydomonas smithii).